The chain runs to 171 residues: S-ribosylhomocysteine lyase (171 aa).

Fe cation contacts are provided by H54, H58, and C128.

It belongs to the LuxS family. As to quaternary structure, homodimer. The cofactor is Fe cation.

It carries out the reaction S-(5-deoxy-D-ribos-5-yl)-L-homocysteine = (S)-4,5-dihydroxypentane-2,3-dione + L-homocysteine. Its function is as follows. Involved in the synthesis of autoinducer 2 (AI-2) which is secreted by bacteria and is used to communicate both the cell density and the metabolic potential of the environment. The regulation of gene expression in response to changes in cell density is called quorum sensing. Catalyzes the transformation of S-ribosylhomocysteine (RHC) to homocysteine (HC) and 4,5-dihydroxy-2,3-pentadione (DPD). This Yersinia enterocolitica serotype O:8 / biotype 1B (strain NCTC 13174 / 8081) protein is S-ribosylhomocysteine lyase.